The sequence spans 1241 residues: ATP-dependent helicase/nuclease subunit A (1241 aa).

The UvrD-like helicase ATP-binding domain occupies 12 to 485; sequence SQWTDDQWKA…IDLAKNFRSR (474 aa). 33-40 serves as a coordination point for ATP; it reads AAAGSGKT. The region spanning 505-805 is the UvrD-like helicase C-terminal domain; the sequence is GEIDYDADAE…RIMTIHKSKG (301 aa).

Belongs to the helicase family. AddA subfamily. In terms of assembly, heterodimer of AddA and AddB/RexB. Mg(2+) is required as a cofactor.

The catalysed reaction is Couples ATP hydrolysis with the unwinding of duplex DNA by translocating in the 3'-5' direction.. The enzyme catalyses ATP + H2O = ADP + phosphate + H(+). Functionally, the heterodimer acts as both an ATP-dependent DNA helicase and an ATP-dependent, dual-direction single-stranded exonuclease. Recognizes the chi site generating a DNA molecule suitable for the initiation of homologous recombination. The AddA nuclease domain is required for chi fragment generation; this subunit has the helicase and 3' -&gt; 5' nuclease activities. The sequence is that of ATP-dependent helicase/nuclease subunit A from Bacillus anthracis.